The sequence spans 128 residues: Small ribosomal subunit protein bS6 (128 aa).

This sequence belongs to the bacterial ribosomal protein bS6 family.

Functionally, binds together with bS18 to 16S ribosomal RNA. The protein is Small ribosomal subunit protein bS6 of Nitratiruptor sp. (strain SB155-2).